A 448-amino-acid chain; its full sequence is Vacuolar amino acid transporter 6 (448 aa).

Residues 1–7 (MVASIRS) lie on the Cytoplasmic side of the membrane. Residues 8 to 28 (GVLTLLHTACGAGILAMPYAF) traverse the membrane as a helical segment. The Vacuolar segment spans residues 29 to 32 (KPFG). Residues 33 to 53 (LIPGVIMIVLCGACAMQSLFI) form a helical membrane-spanning segment. At 54 to 80 (QARVAKYVPQGRASFSALTRLINPNLG) the chain is on the cytoplasmic side. The chain crosses the membrane as a helical span at residues 81–101 (IVFDLAIAIKCFGVGVSYMIV). Residues 102-125 (VGDLMPQIMSVWTRNAWLLNRNVQ) lie on the Vacuolar side of the membrane. The chain crosses the membrane as a helical span at residues 126–146 (ISLIMLFFVAPLSFLKKLNSL). At 147 to 150 (RYAS) the chain is on the cytoplasmic side. Residues 151 to 171 (MVAISSVAYLCVLVLLHYVAP) traverse the membrane as a helical segment. Topologically, residues 172-195 (SDEILRLKGRISYLLPPQSHDLNV) are vacuolar. A helical transmembrane segment spans residues 196-216 (LNTLPIFVFAYTCHHNMFSII). Over 217-229 (NEQRSSRFEHVMK) the chain is Cytoplasmic. The helical transmembrane segment at 230–250 (IPLIAISLALILYIAIGCAGY) threads the bilayer. Topologically, residues 251–267 (LTFGDNIIGNIIMLYPQ) are vacuolar. A helical transmembrane segment spans residues 268-288 (AVSSTIGRIAIVLLVMLAFPL). At 289–357 (QCHPARASIH…PKETPLRGKS (69 aa)) the chain is on the cytoplasmic side. Ser344 is subject to Phosphoserine. Residues 358 to 378 (FIVITCSILVASYLVAISVSS) traverse the membrane as a helical segment. The Vacuolar segment spans residues 379-381 (LAR). The chain crosses the membrane as a helical span at residues 382-402 (VLAIVGATGSTSISFILPGLF). Over 403–424 (GYKLIGTEHKTAVPLTTKIFKY) the chain is Cytoplasmic. The chain crosses the membrane as a helical span at residues 425 to 445 (TGLLLFIWGLIIMITCLTAAL). Topologically, residues 446–448 (KLN) are vacuolar.

Belongs to the amino acid/polyamine transporter 2 family.

The protein localises to the vacuole membrane. Involved in amino acid efflux from the vacuole to the cytoplasm. Capable of transporting aspartate and glutamate. Requires ATP for function. The sequence is that of Vacuolar amino acid transporter 6 (AVT6) from Saccharomyces cerevisiae (strain ATCC 204508 / S288c) (Baker's yeast).